Here is a 216-residue protein sequence, read N- to C-terminus: FMN-dependent NADH:quinone oxidoreductase (216 aa).

Residues 15 to 17 (SVS) and 139 to 142 (SRGG) contribute to the FMN site.

It belongs to the azoreductase type 1 family. Homodimer. It depends on FMN as a cofactor.

The catalysed reaction is 2 a quinone + NADH + H(+) = 2 a 1,4-benzosemiquinone + NAD(+). It carries out the reaction N,N-dimethyl-1,4-phenylenediamine + anthranilate + 2 NAD(+) = 2-(4-dimethylaminophenyl)diazenylbenzoate + 2 NADH + 2 H(+). In terms of biological role, quinone reductase that provides resistance to thiol-specific stress caused by electrophilic quinones. Its function is as follows. Also exhibits azoreductase activity. Catalyzes the reductive cleavage of the azo bond in aromatic azo compounds to the corresponding amines. In Acidovorax ebreus (strain TPSY) (Diaphorobacter sp. (strain TPSY)), this protein is FMN-dependent NADH:quinone oxidoreductase.